Reading from the N-terminus, the 610-residue chain is Zinc metalloproteinase-disintegrin-like 4a (610 aa).

The N-terminal stretch at methionine 1–serine 20 is a signal peptide. A propeptide spanning residues valine 21–proline 189 is cleaved from the precursor. The Peptidase M12B domain occupies lysine 199–proline 395. Asparagine 218 is a glycosylation site (N-linked (GlcNAc...) asparagine). Aspartate 286 lines the Ca(2+) pocket. Cystine bridges form between cysteine 310–cysteine 390, cysteine 350–cysteine 374, and cysteine 352–cysteine 357. Histidine 335 provides a ligand contact to Zn(2+). Residue glutamate 336 is part of the active site. Histidine 339 and histidine 345 together coordinate Zn(2+). The Ca(2+) site is built by cysteine 390, valine 405, asparagine 408, phenylalanine 410, glutamate 412, glutamate 415, and aspartate 418. Residues proline 403 to asparagine 488 form the Disintegrin domain. 14 cysteine pairs are disulfide-bonded: cysteine 406–cysteine 435, cysteine 417–cysteine 430, cysteine 419–cysteine 425, cysteine 429–cysteine 452, cysteine 443–cysteine 449, cysteine 448–cysteine 474, cysteine 461–cysteine 481, cysteine 468–cysteine 499, cysteine 492–cysteine 504, cysteine 511–cysteine 561, cysteine 526–cysteine 572, cysteine 539–cysteine 549, cysteine 556–cysteine 598, and cysteine 592–cysteine 603. A D/ECD-tripeptide motif is present at residues glutamate 467–aspartate 469.

Belongs to the venom metalloproteinase (M12B) family. P-III subfamily. The cofactor is Zn(2+). In terms of tissue distribution, expressed by the venom gland.

Its subcellular location is the secreted. Snake venom metalloproteinase that impairs hemostasis in the envenomed animal. The polypeptide is Zinc metalloproteinase-disintegrin-like 4a (Crotalus adamanteus (Eastern diamondback rattlesnake)).